Here is a 239-residue protein sequence, read N- to C-terminus: tRNA (guanine-N(7)-)-methyltransferase (239 aa).

4 residues coordinate S-adenosyl-L-methionine: Glu68, Glu93, Asp120, and Asp143. The active site involves Asp143. Residues Lys147, Asp180, and 217–220 (TKFE) each bind substrate.

Belongs to the class I-like SAM-binding methyltransferase superfamily. TrmB family.

It carries out the reaction guanosine(46) in tRNA + S-adenosyl-L-methionine = N(7)-methylguanosine(46) in tRNA + S-adenosyl-L-homocysteine. Its pathway is tRNA modification; N(7)-methylguanine-tRNA biosynthesis. Functionally, catalyzes the formation of N(7)-methylguanine at position 46 (m7G46) in tRNA. In Vibrio cholerae serotype O1 (strain ATCC 39315 / El Tor Inaba N16961), this protein is tRNA (guanine-N(7)-)-methyltransferase.